Reading from the N-terminus, the 432-residue chain is Adenylosuccinate synthetase (432 aa).

Residues 13 to 19 (GDEGKGK) and 41 to 43 (GHT) contribute to the GTP site. D14 acts as the Proton acceptor in catalysis. Positions 14 and 41 each coordinate Mg(2+). Residues 14-17 (DEGK), 39-42 (NAGH), T130, R144, Q225, T240, and R304 contribute to the IMP site. The active-site Proton donor is H42. 300 to 306 (ATTGRRR) is a binding site for substrate. GTP is bound by residues R306, 332–334 (KLD), and 415–417 (STG).

The protein belongs to the adenylosuccinate synthetase family. Homodimer. Mg(2+) serves as cofactor.

The protein localises to the cytoplasm. The enzyme catalyses IMP + L-aspartate + GTP = N(6)-(1,2-dicarboxyethyl)-AMP + GDP + phosphate + 2 H(+). It participates in purine metabolism; AMP biosynthesis via de novo pathway; AMP from IMP: step 1/2. In terms of biological role, plays an important role in the de novo pathway of purine nucleotide biosynthesis. Catalyzes the first committed step in the biosynthesis of AMP from IMP. This is Adenylosuccinate synthetase from Pectobacterium carotovorum subsp. carotovorum (strain PC1).